The chain runs to 771 residues: Probable cation-transporting ATPase G (771 aa).

The HMA domain occupies 19–86 (GRMRVQATGF…AIIDAETVPA (68 aa)). Residues 72-92 (AAILSAIIDAETVPAAAVPAY) traverse the membrane as a helical segment. The disordered stretch occupies residues 122–143 (DVAAQPSGETSDACCDGEDNED). 5 consecutive transmembrane segments (helical) span residues 163–183 (VLLTASLVAAWAYPLWPVVLG), 209–229 (VGVGTLMTIAALGAVALGELG), 330–350 (VFAGSINGLGVLQVGVTATAA), 387–407 (MIAAALIAGTGSVLGNPLVWI), and 411–431 (LVVLVAAAPCALAIAVPVTVV). Asp462 functions as the 4-aspartylphosphate intermediate in the catalytic mechanism. Asp651 and Asp655 together coordinate Mg(2+). Helical transmembrane passes span 657–677 (PALAAADLGIAMGAMGTDVAI) and 716–736 (IITVLMPLALFGILGLAAVVL).

This sequence belongs to the cation transport ATPase (P-type) (TC 3.A.3) family. Type IB subfamily.

Its subcellular location is the cell membrane. The enzyme catalyses ATP + H2O = ADP + phosphate + H(+). This is Probable cation-transporting ATPase G (ctpG) from Mycobacterium bovis (strain ATCC BAA-935 / AF2122/97).